The primary structure comprises 346 residues: Dehydrogenase orf1 (346 aa).

43–48 (VDYATQ) is an NADP(+) binding site. 133–140 (LAFSTAIV) is a binding site for substrate. NADP(+)-binding positions include 170–173 (ATSV), 193–196 (SPHN), Tyr211, and 251–252 (LN). Residue 269-273 (APPNV) coordinates substrate. Residue 336–337 (VS) coordinates NADP(+).

The protein belongs to the zinc-containing alcohol dehydrogenase family.

Its pathway is secondary metabolite biosynthesis. Functionally, dehydrogenase; part of the gene cluster that mediates the biosynthesis of nigerpyrone and its derivatives carbonarone A and pestalamide A. The biosynthesis pathway begins with the polyketide assembly by epaA to form phenylacetyl triketide precursor from successive condensation of two malonyl-CoA, presumably with one phenylacetyl-CoA starter unit produced by the phenylacetyl-CoA ligase epaB. For the nigerpyrone biosynthesis, the reactive polyketide chain is released as an aldehyde through the R-domain. A nonenzymatic cyclization and dehydration may create nigerpyrone. For the biosynthesis of carbonarone A and pestalamide A, an extra methyl group is added through the C-methyltransferase domain. Several further steps involving the dehydrogenase orf1, the cytochrome P450 monooxygenase orf2 and the FAD-dependent monooxygenase orf3 are required to form a carbonarone A precursor which is converted to carbonarone A via cyclization. The O-acetyltransferase epaC could catalyze the transfer of 2-methylsuccinyl-CoA, a common intermediate in the ethylmalonyl-CoA pathway, to generate the final product pestalamide A. This Aspergillus niger (strain ATCC MYA-4892 / CBS 513.88 / FGSC A1513) protein is Dehydrogenase orf1.